The following is a 358-amino-acid chain: MTHQIAVLPGDGIGPEIVEQAERVLKALDLPLELRQAPVGGAAFDQFEHPLPPATLELAQGSHAVLFGAVGDWKYDTLPREFRPEQAILGLRKALGLFANLRPAILYPELASASSLKPEIVSGLDILIIRELTGDIYFGTPRGVRTAADGAFAGEREGYDTMRYAESEVRRIARIGFESARKRNKKLCSVDKANVLETSQFWRDLVIEVSRDYLDVELSHMYVDNAAMQLVRNPRQFDVIVTGNLFGDILSDEAAMLTGSIGMLPSASLNAAGQGLYEPSHGSAPDIAGQGIANPLATILSAAMLLRYSLNLAPQADRVEAAVRKVLADGLRTADIHEAGTTKVSTSQMGDAVLKALG.

Residues Arg92, Arg102, Arg130, and Asp224 each coordinate substrate. 3 residues coordinate Mg(2+): Asp224, Asp248, and Asp252. 282–294 (GSAPDIAGQGIAN) contacts NAD(+).

The protein belongs to the isocitrate and isopropylmalate dehydrogenases family. LeuB type 1 subfamily. In terms of assembly, homodimer. Mg(2+) serves as cofactor. Mn(2+) is required as a cofactor.

Its subcellular location is the cytoplasm. It carries out the reaction (2R,3S)-3-isopropylmalate + NAD(+) = 4-methyl-2-oxopentanoate + CO2 + NADH. It participates in amino-acid biosynthesis; L-leucine biosynthesis; L-leucine from 3-methyl-2-oxobutanoate: step 3/4. In terms of biological role, catalyzes the oxidation of 3-carboxy-2-hydroxy-4-methylpentanoate (3-isopropylmalate) to 3-carboxy-4-methyl-2-oxopentanoate. The product decarboxylates to 4-methyl-2 oxopentanoate. This is 3-isopropylmalate dehydrogenase from Bordetella pertussis (strain Tohama I / ATCC BAA-589 / NCTC 13251).